The chain runs to 1235 residues: Major DNA-binding protein (1235 aa).

Residues 536–584 (GGLDGKGDDGVPGGGAGGGGGRDVSGGPSDGLGGGRGGGGGGDSGGMMG) are disordered. Residues 545-584 (GVPGGGAGGGGGRDVSGGPSDGLGGGRGGGGGGDSGGMMG) show a composition bias toward gly residues. Residues 846–847 (FW) carry the Required for filament formation motif. The span at 1214–1226 (GVGGSSGGGGGSG) shows a compositional bias: gly residues. The interval 1214 to 1235 (GVGGSSGGGGGSGLLPAKRSRL) is disordered. Residues 1232-1235 (RSRL) form a required for nuclear localization region.

This sequence belongs to the herpesviridae major DNA-binding protein family. In terms of assembly, homooligomers. Forms double-helical filaments necessary for the formation of replication compartments within the host nucleus. Interacts with the origin-binding protein. Interacts with the helicase primase complex; this interaction stimulates primer synthesis activity of the helicase-primase complex. Interacts with the DNA polymerase. Interacts with the alkaline exonuclease; this interaction increases its nuclease processivity.

It is found in the host nucleus. Functionally, plays several crucial roles in viral infection. Participates in the opening of the viral DNA origin to initiate replication by interacting with the origin-binding protein. May disrupt loops, hairpins and other secondary structures present on ssDNA to reduce and eliminate pausing of viral DNA polymerase at specific sites during elongation. Promotes viral DNA recombination by performing strand-transfer, characterized by the ability to transfer a DNA strand from a linear duplex to a complementary single-stranded DNA circle. Can also catalyze the renaturation of complementary single strands. Additionally, reorganizes the host cell nucleus, leading to the formation of prereplicative sites and replication compartments. This process is driven by the protein which can form double-helical filaments in the absence of DNA. This Homo sapiens (Human) protein is Major DNA-binding protein.